The primary structure comprises 160 residues: Small ribosomal subunit protein uS17m (160 aa).

This sequence belongs to the universal ribosomal protein uS17 family. Component of the mitochondrial ribosome small subunit (28S) which comprises a 12S rRNA and about 30 distinct proteins.

The protein resides in the mitochondrion. The sequence is that of Small ribosomal subunit protein uS17m (mrps-17) from Caenorhabditis elegans.